A 337-amino-acid polypeptide reads, in one-letter code: 4-hydroxythreonine-4-phosphate dehydrogenase (337 aa).

The substrate site is built by His-139 and Thr-140. Residues His-173, His-218, and His-273 each coordinate a divalent metal cation. Positions 281, 290, and 299 each coordinate substrate.

It belongs to the PdxA family. Homodimer. It depends on Zn(2+) as a cofactor. Mg(2+) serves as cofactor. Requires Co(2+) as cofactor.

The protein localises to the cytoplasm. It catalyses the reaction 4-(phosphooxy)-L-threonine + NAD(+) = 3-amino-2-oxopropyl phosphate + CO2 + NADH. It participates in cofactor biosynthesis; pyridoxine 5'-phosphate biosynthesis; pyridoxine 5'-phosphate from D-erythrose 4-phosphate: step 4/5. Functionally, catalyzes the NAD(P)-dependent oxidation of 4-(phosphooxy)-L-threonine (HTP) into 2-amino-3-oxo-4-(phosphooxy)butyric acid which spontaneously decarboxylates to form 3-amino-2-oxopropyl phosphate (AHAP). The polypeptide is 4-hydroxythreonine-4-phosphate dehydrogenase (Rhodopseudomonas palustris (strain ATCC BAA-98 / CGA009)).